A 557-amino-acid polypeptide reads, in one-letter code: Urocanate hydratase (557 aa).

NAD(+)-binding positions include 53–54 (GG), Gln131, 177–179 (GMG), Glu197, Arg202, 243–244 (NA), 264–268 (QTSAH), 274–275 (YL), and Tyr323. Cys411 is a catalytic residue. Residue Gly493 coordinates NAD(+).

This sequence belongs to the urocanase family. It depends on NAD(+) as a cofactor.

It is found in the cytoplasm. The enzyme catalyses 4-imidazolone-5-propanoate = trans-urocanate + H2O. Its pathway is amino-acid degradation; L-histidine degradation into L-glutamate; N-formimidoyl-L-glutamate from L-histidine: step 2/3. In terms of biological role, catalyzes the conversion of urocanate to 4-imidazolone-5-propionate. This is Urocanate hydratase from Pseudomonas entomophila (strain L48).